A 130-amino-acid polypeptide reads, in one-letter code: MARVKRAVNAQKKRRVVLERASGYRGQRSRLYRKAKEQVTHSLVYSYNDRRKNKGNFRKLWIQRINAAARAQGMTYNRFIQGLNLAGVEVDRKILADLAVNDVTAFNALVETAKAALPADVNAPKAEASA.

The protein belongs to the bacterial ribosomal protein bL20 family.

In terms of biological role, binds directly to 23S ribosomal RNA and is necessary for the in vitro assembly process of the 50S ribosomal subunit. It is not involved in the protein synthesizing functions of that subunit. The protein is Large ribosomal subunit protein bL20 of Nocardioides sp. (strain ATCC BAA-499 / JS614).